The following is a 186-amino-acid chain: Iodotyrosine deiodinase (186 aa).

Residues 11-15, 38-39, and S39 each bind FMN; these read RKTVR and PS. 4 residues coordinate 3-iodo-L-tyrosine: M41, E68, Y72, and K92. M41, E68, Y72, and K92 together coordinate L-tyrosine. R176 lines the FMN pocket.

It belongs to the nitroreductase family. In terms of assembly, homodimer. Requires FMN as cofactor.

It carries out the reaction 2 iodide + L-tyrosine + 2 NADP(+) = 3,5-diiodo-L-tyrosine + 2 NADPH + H(+). The catalysed reaction is iodide + L-tyrosine + NADP(+) = 3-iodo-L-tyrosine + NADPH. The enzyme catalyses 3-iodo-L-tyrosine + iodide + NADP(+) = 3,5-diiodo-L-tyrosine + NADPH + H(+). It catalyses the reaction L-tyrosine + chloride + NADP(+) = 3-chloro-L-tyrosine + NADPH. It carries out the reaction bromide + L-tyrosine + NADP(+) = 3-bromo-L-tyrosine + NADPH. Functionally, catalyzes the dehalogenation of halotyrosines such as 3-bromo-L-tyrosine, 3-chloro-L-tyrosine, 3-iodo-L-tyrosine and 3,5-diiodo-L-tyrosine. Activity towards 2-iodophenol is weak. The protein is Iodotyrosine deiodinase of Thermotoga neapolitana (strain ATCC 49049 / DSM 4359 / NBRC 107923 / NS-E).